We begin with the raw amino-acid sequence, 433 residues long: Probable exopolygalacturonase X (433 aa).

The N-terminal stretch at 1-21 (MKLTQATTLLLSLGLSLPVEG) is a signal peptide. The interval 30–54 (VGPKPPFRPLPASTPRNKTCQVQSN) is disordered. Residues 43-54 (TPRNKTCQVQSN) show a composition bias toward polar residues. Asn46, Asn127, and Asn197 each carry an N-linked (GlcNAc...) asparagine glycan. A PbH1 1 repeat occupies 229–250 (SSNIVIQNSVINNGDDCVSFKP). The active-site Proton donor is Asp243. A disulfide bond links Cys245 and Cys262. 2 N-linked (GlcNAc...) asparagine glycosylation sites follow: Asn251 and Asn263. One copy of the PbH1 2 repeat lies at 252–272 (STEILVQNLHCNGSHGISVGS). His266 is an active-site residue. Asn290, Asn295, Asn327, Asn352, and Asn362 each carry an N-linked (GlcNAc...) asparagine glycan. Residues 325-346 (VQNITYDKMYIENVDWAIEVTQ) form a PbH1 3 repeat. One copy of the PbH1 4 repeat lies at 360–403 (PSNLTISDVYFNDLTGVTSGKNDPNVGTIICSSPDVCSGIHATN). A disulfide bridge links Cys390 with Cys396.

The protein belongs to the glycosyl hydrolase 28 family.

The protein localises to the secreted. It carries out the reaction [(1-&gt;4)-alpha-D-galacturonosyl](n) + H2O = alpha-D-galacturonate + [(1-&gt;4)-alpha-D-galacturonosyl](n-1). Specific in hydrolyzing the terminal glycosidic bond of polygalacturonic acid and oligogalacturonates. This is Probable exopolygalacturonase X (pgaX) from Aspergillus flavus (strain ATCC 200026 / FGSC A1120 / IAM 13836 / NRRL 3357 / JCM 12722 / SRRC 167).